The chain runs to 824 residues: Frameshifted structural polyprotein (824 aa).

The span at 1-10 shows a compositional bias: polar residues; the sequence is MEFIPTQTFY. The interval 1–104 is disordered; it reads MEFIPTQTFY…KKKKPGRRER (104 aa). Residues 22–44 are compositionally biased toward low complexity; it reads RPTIQVIRPRPRPQRQAGQLAQL. The host transcription inhibition stretch occupies residues 36–68; that stretch reads RQAGQLAQLISAVNKLTMRAVPQQKPRKNRKNK. A compositionally biased stretch (basic residues) spans 60–72; sequence KPRKNRKNKKQKQ. The Nuclear localization signal motif lies at 61-99; that stretch reads PRKNRKNKKQKQKQQAPQNNTNQKKQPPKKKPAQKKKKP. The segment covering 73-85 has biased composition (low complexity); the sequence is KQQAPQNNTNQKK. The segment at 84 to 114 is binding to the viral RNA; the sequence is KKQPPKKKPAQKKKKPGRRERMCMKIENDCI. The segment covering 86-101 has biased composition (basic residues); the sequence is QPPKKKPAQKKKKPGR. Ribosome-binding stretches follow at residues 91-100 and 99-113; these read KPAQKKKKPG and PGRRERMCMKIENDC. A disulfide bridge links Cys-113 with Cys-128. In terms of domain architecture, Peptidase S3 spans 113-261; the sequence is CIFEVKHEGK…KITPEGAEEW (149 aa). Residue His-139 is the Charge relay system of the active site. Positions 144–154 match the Nuclear export signal motif; it reads IDNADLAKLAF. The active-site Charge relay system is the Asp-161. The interval 183 to 193 is dimerization of the capsid protein; the sequence is PEGYYNWHHGA. The active-site Charge relay system is the Ser-213. The dimerization of the capsid protein stretch occupies residues 219–223; sequence DNKGR. Positions 262-274 are functions as an uncleaved signal peptide for the precursor of protein E3/E2; that stretch reads SLAIPVMCLLANT. Residues 262-692 are Extracellular-facing; that stretch reads SLAIPVMCLL…YYYELYPTMT (431 aa). 3 N-linked (GlcNAc...) asparagine; by host glycosylation sites follow: Asn-273, Asn-588, and Asn-670. A helical membrane pass occupies residues 693–713; it reads VVVVSVASFILLSMVGMAVGM. Residues 714 to 748 lie on the Cytoplasmic side of the membrane; the sequence is CMCARRRCITPYELTPGATVPFLLSLICCIRTAKA. S-palmitoyl cysteine; by host attachment occurs at residues Cys-721, Cys-741, and Cys-742. Positions 721-741 are transient transmembrane before p62-6K protein processing; the sequence is CITPYELTPGATVPFLLSLIC. Over 749 to 763 the chain is Extracellular; it reads ATYQEAAVYLWNEQQ. Residues 764-784 traverse the membrane as a helical segment; sequence PLFWLQALIPLAALIVLCNCL. Over 785-795 the chain is Cytoplasmic; it reads RLLPCCCKTLA.

The protein belongs to the alphavirus frameshifted structural polyprotein family. Homodimer. Homomultimer. Interacts with host karyopherin KPNA4; this interaction allows the nuclear import of the viral capsid protein. Interacts with spike glycoprotein E2. Interacts with host IRAK1; the interaction leads to inhibition of IRAK1-dependent signaling. In terms of assembly, the precursor of protein E3/E2 and E1 form a heterodimer shortly after synthesis. As to quaternary structure, processing of the precursor of protein E3/E2 into E2 and E3 results in a heterodimer of the spike glycoproteins E2 and E1. Spike at virion surface are constituted of three E2-E1 heterodimers. Interacts with 6K protein. Interacts with host MXRA8; this interaction mediates virus entry. In terms of processing, specific enzymatic cleavages in vivo yield mature proteins. Capsid protein is auto-cleaved during polyprotein translation, unmasking a signal peptide at the N-terminus of the precursor of E3/E2. The remaining polyprotein is then targeted to the host endoplasmic reticulum, where host signal peptidase cleaves it into pE2 and TF. pE2 is further processed to mature E3 and E2 by host furin in trans-Golgi vesicle. Palmitoylated via thioester bonds. These palmitoylations may induce disruption of the C-terminus transmembrane. This would result in the reorientation of E2 C-terminus from lumenal to cytoplasmic side. Post-translationally, palmitoylated via thioester bonds.

Its subcellular location is the virion. The protein resides in the host cytoplasm. It localises to the host cell membrane. The protein localises to the host nucleus. It is found in the virion membrane. The catalysed reaction is Autocatalytic release of the core protein from the N-terminus of the togavirus structural polyprotein by hydrolysis of a -Trp-|-Ser- bond.. Its function is as follows. Forms an icosahedral capsid with a T=4 symmetry composed of 240 copies of the capsid protein surrounded by a lipid membrane through which penetrate 80 spikes composed of trimers of E1-E2 heterodimers. The capsid protein binds to the viral RNA genome at a site adjacent to a ribosome binding site for viral genome translation following genome release. Possesses a protease activity that results in its autocatalytic cleavage from the nascent structural protein. Following its self-cleavage, the capsid protein transiently associates with ribosomes, and within several minutes the protein binds to viral RNA and rapidly assembles into icosahedric core particles. The resulting nucleocapsid eventually associates with the cytoplasmic domain of the spike glycoprotein E2 at the cell membrane, leading to budding and formation of mature virions. In case of infection, new virions attach to target cells and after clathrin-mediated endocytosis their membrane fuses with the host endosomal membrane. This leads to the release of the nucleocapsid into the cytoplasm, followed by an uncoating event necessary for the genomic RNA to become accessible. The uncoating might be triggered by the interaction of capsid proteins with ribosomes. Binding of ribosomes would release the genomic RNA since the same region is genomic RNA-binding and ribosome-binding. Specifically inhibits interleukin-1 receptor-associated kinase 1/IRAK1-dependent signaling during viral entry, representing a means by which the alphaviruses may evade innate immune detection and activation prior to viral gene expression. Functionally, provides the signal sequence for the translocation of the precursor of protein E3/E2 to the host endoplasmic reticulum. Furin-cleaved E3 remains associated with spike glycoprotein E1 and mediates pH protection of the latter during the transport via the secretory pathway. After virion release from the host cell, the assembly protein E3 is gradually released in the extracellular space. In terms of biological role, plays a role in viral attachment to target host cell, by binding to the cell receptor. Synthesized as a p62 precursor which is processed by furin at the cell membrane just before virion budding, giving rise to E2-E1 heterodimer. The p62-E1 heterodimer is stable, whereas E2-E1 is unstable and dissociate at low pH. p62 is processed at the last step, presumably to avoid E1 fusion activation before its final export to cell surface. E2 C-terminus contains a transitory transmembrane that would be disrupted by palmitoylation, resulting in reorientation of the C-terminal tail from lumenal to cytoplasmic side. This step is critical since E2 C-terminus is involved in budding by interacting with capsid proteins. This release of E2 C-terminus in cytoplasm occurs lately in protein export, and precludes premature assembly of particles at the endoplasmic reticulum membrane. Plays a role in viral assembly and release. This chain is Frameshifted structural polyprotein, found in Aedes aegypti (Yellowfever mosquito).